A 108-amino-acid polypeptide reads, in one-letter code: ATP-dependent Clp protease adapter protein ClpS (108 aa).

The protein belongs to the ClpS family. Binds to the N-terminal domain of the chaperone ClpA.

Functionally, involved in the modulation of the specificity of the ClpAP-mediated ATP-dependent protein degradation. The sequence is that of ATP-dependent Clp protease adapter protein ClpS from Leptospira borgpetersenii serovar Hardjo-bovis (strain JB197).